A 348-amino-acid polypeptide reads, in one-letter code: QIGVCYGMMGNNLPSANEVINLYRSNNIRRMRLYDPNQAALQALRNSGIELILGVPNSDLQGLATNADTARQWVQRNVLNFWPSVKIKYIAVGNEVSPVGGSSWYAQYVLPAVQNVYQAVRAQGLHDQIKVSTAIDMTLIGNSYPPSQGSFRGDVRSYLDPIIGYLLYASAPLHVNVYPYFSYSGNPRDISLPYALFTSPNVVVRDGQYGYQNLFDAMLDSVHAAIDNTRIGYVEVVVSESGWPSDGGFGATYDNARVYLDNLVRRAGRGSPRRPSKPTETYIFAMFDENQKSPEIEKHFGLFKPSKEKKYPFGFGAQRMQRLLLMSSMQHIPLRVTCKLEPSSQSLL.

Q1 carries the pyrrolidone carboxylic acid modification. E95 functions as the Proton donor in the catalytic mechanism. Catalysis depends on E240, which acts as the Nucleophile. Residues 317–348 constitute a propeptide, removed in mature form; it reads AQRMQRLLLMSSMQHIPLRVTCKLEPSSQSLL.

This sequence belongs to the glycosyl hydrolase 17 family.

It is found in the vacuole. It carries out the reaction Hydrolysis of (1-&gt;3)-beta-D-glucosidic linkages in (1-&gt;3)-beta-D-glucans.. Its function is as follows. Implicated in the defense of plants against pathogens. This Phaseolus vulgaris (Kidney bean) protein is Glucan endo-1,3-beta-glucosidase, basic isoform.